The following is a 296-amino-acid chain: Acetyl-coenzyme A carboxylase carboxyl transferase subunit beta (296 aa).

Positions 26-295 constitute a CoA carboxyltransferase N-terminal domain; it reads VWTKCTNCEQ…PFKVGELIIE (270 aa). Zn(2+)-binding residues include Cys-30, Cys-33, Cys-49, and Cys-52. The segment at 30–52 adopts a C4-type zinc-finger fold; that stretch reads CTNCEQVLYSEELKRNMQVCPKC.

This sequence belongs to the AccD/PCCB family. As to quaternary structure, acetyl-CoA carboxylase is a heterohexamer composed of biotin carboxyl carrier protein (AccB), biotin carboxylase (AccC) and two subunits each of ACCase subunit alpha (AccA) and ACCase subunit beta (AccD). Requires Zn(2+) as cofactor.

The protein localises to the cytoplasm. It carries out the reaction N(6)-carboxybiotinyl-L-lysyl-[protein] + acetyl-CoA = N(6)-biotinyl-L-lysyl-[protein] + malonyl-CoA. The protein operates within lipid metabolism; malonyl-CoA biosynthesis; malonyl-CoA from acetyl-CoA: step 1/1. In terms of biological role, component of the acetyl coenzyme A carboxylase (ACC) complex. Biotin carboxylase (BC) catalyzes the carboxylation of biotin on its carrier protein (BCCP) and then the CO(2) group is transferred by the transcarboxylase to acetyl-CoA to form malonyl-CoA. The sequence is that of Acetyl-coenzyme A carboxylase carboxyl transferase subunit beta from Haemophilus ducreyi (strain 35000HP / ATCC 700724).